The primary structure comprises 216 residues: Cytochrome c biogenesis ATP-binding export protein CcmA (216 aa).

The ABC transporter domain occupies 11–216 (VSASKLTCIR…RKIRLDYRFV (206 aa)). Position 43–50 (43–50 (GPNGAGKT)) interacts with ATP.

It belongs to the ABC transporter superfamily. CcmA exporter (TC 3.A.1.107) family. In terms of assembly, the complex is composed of two ATP-binding proteins (CcmA) and two transmembrane proteins (CcmB).

It is found in the cell inner membrane. The enzyme catalyses heme b(in) + ATP + H2O = heme b(out) + ADP + phosphate + H(+). Its function is as follows. Part of the ABC transporter complex CcmAB involved in the biogenesis of c-type cytochromes; once thought to export heme, this seems not to be the case, but its exact role is uncertain. Responsible for energy coupling to the transport system. This is Cytochrome c biogenesis ATP-binding export protein CcmA from Shewanella sp. (strain MR-7).